Consider the following 328-residue polypeptide: DNA-directed RNA polymerase subunit alpha (328 aa).

Positions M1 to E230 are alpha N-terminal domain (alpha-NTD). The segment at P257–K328 is alpha C-terminal domain (alpha-CTD).

This sequence belongs to the RNA polymerase alpha chain family. In terms of assembly, homodimer. The RNAP catalytic core consists of 2 alpha, 1 beta, 1 beta' and 1 omega subunit. When a sigma factor is associated with the core the holoenzyme is formed, which can initiate transcription.

It carries out the reaction RNA(n) + a ribonucleoside 5'-triphosphate = RNA(n+1) + diphosphate. In terms of biological role, DNA-dependent RNA polymerase catalyzes the transcription of DNA into RNA using the four ribonucleoside triphosphates as substrates. This is DNA-directed RNA polymerase subunit alpha from Fervidobacterium nodosum (strain ATCC 35602 / DSM 5306 / Rt17-B1).